The following is a 966-amino-acid chain: MLPGRLCLVPLLLALGVGSGGGSGDGGDSRRRRLLVAKVNKHKPWIETSYHGVITENNDTVILDPPLVALDKDAPVPFAGEICAFKIHGQELPFEAVVLNKTSGEGRLRAKSPIDCELQKEYTFIIQAYDCGAGPREAAWKKSHKAVVHIQVKDVNEFAPTFKEPAYKAIVTEGKIYDSILQVEAIDEDCSPQYSQICNYEIVTTDVPFAIDRNGNIRNTEKLSYDKQHQYEILVTAYDCGQKPAAQDTLVQVDVKPVCKPGWQDWTKRIEYQPGSGSMPLFPSIHLETCDGAVSSLQVTAELQTNYIGKGCDRETYSEKSLQKLCGASSGIIDLLPSPSAATNWTAGLLVDSSEMIFKFDGRQGAKIPDGIVPKNLTDQFTITMWMKHGPSPGVRAEKETILCNSDKTEMNRHHYALYVHNCRLVFLLRKDFDQADTFRPAEFHWKLDQICDKEWHYYVINVEFPVVTLYMDGATYEPYLVTNDWPIHPSHIAMQLTVGACWQGGEVAKPRFAQFFHGSLASLTIRPGKMESQKVISCLQACKEGLDINSLESLGRGIKYHFNPSQSILVMEGDDIGNINRALQKVSYINSRQFPTAGVRRLRLSSKVQCFGEDVCISIPDVDAYIMVLQAIEPQITLQGTERFWRPAAQFESARGVTLFPDIKIVSTFAKTEASGDMRATGTAPKSAVLEEMLHNLDFCDILVLGGDLDPRQECLELNHSELHQRHLDATNSTAGYSIYGVGSMNRYEQVLHHLRYRNWHPTSLETRRFRIKCSELNGRYTSNEFNLEVSVLHEVRVSDKEHVNHLIVQPPFLQSVHHPETRSSIQRSSVVPSIATVVIIISVCMLVFVVAMGVYRVRIAHQHFIQETEAAKEAEMDWDDSALTITVNPMEKHEGPGNGEDETTEVEEEEEAEEGSSSSSSGSDDSEEEEEEGMGRVRHGQSGTSSQSPERSTWNTAGVINIWK.

Residues 1–20 (MLPGRLCLVPLLLALGVGSG) form the signal peptide. Topologically, residues 21–835 (GGSGDGGDSR…SIQRSSVVPS (815 aa)) are extracellular. 2 consecutive Cadherin domains span residues 46–162 (IETS…APTF) and 163–282 (KEPA…MPLF). 2 N-linked (GlcNAc...) asparagine glycosylation sites follow: Asn58 and Asn100. N-linked (GlcNAc...) asparagine glycosylation is found at Asn344, Asn376, Asn720, and Asn733. Residues 836-856 (IATVVIIISVCMLVFVVAMGV) traverse the membrane as a helical segment. Over 857–966 (YRVRIAHQHF…NTAGVINIWK (110 aa)) the chain is Cytoplasmic. The interval 890–966 (NPMEKHEGPG…NTAGVINIWK (77 aa)) is disordered. Over residues 901–916 (GEDETTEVEEEEEAEE) the composition is skewed to acidic residues. Over residues 943 to 960 (QSGTSSQSPERSTWNTAG) the composition is skewed to polar residues.

This sequence belongs to the calsyntenin family. In terms of processing, proteolytically processed under normal cellular conditions. A primary zeta-cleavage generates a large extracellular (soluble) N-terminal domain (sAlc) and a short C-terminal transmembrane fragment (CTF1). A secondary cleavage catalyzed by gamma-secretase within the transmembrane domain releases the beta-Alc-gamma chain in the extracellular milieu and produces an intracellular fragment (AlcICD). This processing is strongly suppressed in the tripartite complex formed with APBA2 and APP, which seems to prevent the association with PSEN1. As to expression, restricted to the brain. In the cerebral cortex, found in the somas and neuropil of all layers. Expressed at highest levels in neurons of cortical layers 5 and 6 and, at lower levels, in neurons of the upper layers. Highly expressed in Purkinje cells. Also found in a few scattered interneurons throughout the granule cell layer and occasionally in neurons in the molecular layer (at protein level). Present throughout all cortical layers, highest levels in GABAergic neurons (based on morphology and distribution pattern).

The protein resides in the postsynaptic cell membrane. The protein localises to the endoplasmic reticulum membrane. It is found in the golgi apparatus membrane. Its subcellular location is the cell projection. It localises to the dendrite. Postsynaptic adhesion molecule that binds to presynaptic neurexins to mediate synapse formation, and which is involved in learning and memory. Promotes synapse development by acting as a cell adhesion molecule at the postsynaptic membrane, which associates with neurexin-alpha at the presynaptic membrane. The protein is Calsyntenin-2 of Mus musculus (Mouse).